The primary structure comprises 67 residues: Sec-independent protein translocase protein TatA (67 aa).

The helical transmembrane segment at Met-1–Gly-21 threads the bilayer. A disordered region spans residues Leu-43 to Ala-67. Residues Thr-47–Ala-67 are compositionally biased toward basic and acidic residues.

Belongs to the TatA/E family. In terms of assembly, the Tat system comprises two distinct complexes: a TatABC complex, containing multiple copies of TatA, TatB and TatC subunits, and a separate TatA complex, containing only TatA subunits. Substrates initially bind to the TatABC complex, which probably triggers association of the separate TatA complex to form the active translocon.

It localises to the cell inner membrane. In terms of biological role, part of the twin-arginine translocation (Tat) system that transports large folded proteins containing a characteristic twin-arginine motif in their signal peptide across membranes. TatA could form the protein-conducting channel of the Tat system. In Neisseria gonorrhoeae (strain ATCC 700825 / FA 1090), this protein is Sec-independent protein translocase protein TatA.